The following is an 873-amino-acid chain: Nonsense-mediated mRNA decay factor SMG8 (873 aa).

Residues 531–604 form a disordered region; that stretch reads AKKMAQREDE…ESMASKTERE (74 aa). Over residues 540 to 550 the composition is skewed to acidic residues; the sequence is ELAEEDTDLDI. Composition is skewed to low complexity over residues 551-562 and 574-583; these read PESLLDPDSTSP and SSSESSSQES. The span at 591-604 shows a compositional bias: basic and acidic residues; the sequence is SRRDESMASKTERE.

It belongs to the SMG8 family.

Functionally, involved in nonsense-mediated decay (NMD) of mRNAs containing premature stop codons. Probable component of kinase complex containing smg-1 and recruited to stalled ribosomes. This Caenorhabditis elegans protein is Nonsense-mediated mRNA decay factor SMG8 (smg-8).